Here is a 346-residue protein sequence, read N- to C-terminus: Protein-glutamate methylesterase/protein-glutamine glutaminase (346 aa).

A Response regulatory domain is found at 6 to 123; the sequence is KVLVVDDSAF…SLDLEKVRDL (118 aa). Aspartate 57 bears the 4-aspartylphosphate mark. One can recognise a CheB-type methylesterase domain in the interval 155–346; it reads PFDKTIIVIG…ADSIVRQCKR (192 aa). Residues serine 166, histidine 193, and aspartate 289 contribute to the active site.

The protein belongs to the CheB family. In terms of processing, phosphorylated by CheA. Phosphorylation of the N-terminal regulatory domain activates the methylesterase activity.

It localises to the cytoplasm. It catalyses the reaction [protein]-L-glutamate 5-O-methyl ester + H2O = L-glutamyl-[protein] + methanol + H(+). The enzyme catalyses L-glutaminyl-[protein] + H2O = L-glutamyl-[protein] + NH4(+). Its function is as follows. Involved in chemotaxis. Part of a chemotaxis signal transduction system that modulates chemotaxis in response to various stimuli. Catalyzes the demethylation of specific methylglutamate residues introduced into the chemoreceptors (methyl-accepting chemotaxis proteins or MCP) by CheR. Also mediates the irreversible deamidation of specific glutamine residues to glutamic acid. The chain is Protein-glutamate methylesterase/protein-glutamine glutaminase from Halalkalibacterium halodurans (strain ATCC BAA-125 / DSM 18197 / FERM 7344 / JCM 9153 / C-125) (Bacillus halodurans).